The following is a 642-amino-acid chain: 1-deoxy-D-xylulose-5-phosphate synthase 2 (642 aa).

Thiamine diphosphate is bound by residues His73 and Ser113 to Ala115. Mg(2+) is bound at residue Asp144. Thiamine diphosphate-binding positions include Gly145–Ala146, Asn174, Tyr285, and Glu366. Asn174 is a binding site for Mg(2+).

This sequence belongs to the transketolase family. DXPS subfamily. In terms of assembly, homodimer. Mg(2+) serves as cofactor. It depends on thiamine diphosphate as a cofactor.

It carries out the reaction D-glyceraldehyde 3-phosphate + pyruvate + H(+) = 1-deoxy-D-xylulose 5-phosphate + CO2. Its pathway is metabolic intermediate biosynthesis; 1-deoxy-D-xylulose 5-phosphate biosynthesis; 1-deoxy-D-xylulose 5-phosphate from D-glyceraldehyde 3-phosphate and pyruvate: step 1/1. Its function is as follows. Catalyzes the acyloin condensation reaction between C atoms 2 and 3 of pyruvate and glyceraldehyde 3-phosphate to yield 1-deoxy-D-xylulose-5-phosphate (DXP). The sequence is that of 1-deoxy-D-xylulose-5-phosphate synthase 2 from Streptomyces coelicolor (strain ATCC BAA-471 / A3(2) / M145).